Consider the following 358-residue polypeptide: Molybdenum import ATP-binding protein ModC (358 aa).

The 233-residue stretch at 2-234 (NDDISASFFS…PDLPLAHLEE (233 aa)) folds into the ABC transporter domain. 34 to 41 (GRSGSGKT) is an ATP binding site. One can recognise a Mop domain in the interval 293 to 358 (LSSISNCIPV…AQVKSVALID (66 aa)).

Belongs to the ABC transporter superfamily. Molybdate importer (TC 3.A.1.8) family. The complex is composed of two ATP-binding proteins (ModC), two transmembrane proteins (ModB) and a solute-binding protein (ModA).

It localises to the cell inner membrane. It carries out the reaction molybdate(out) + ATP + H2O = molybdate(in) + ADP + phosphate + H(+). Its function is as follows. Part of the ABC transporter complex ModABC involved in molybdenum import. Responsible for energy coupling to the transport system. This chain is Molybdenum import ATP-binding protein ModC, found in Hahella chejuensis (strain KCTC 2396).